Here is a 191-residue protein sequence, read N- to C-terminus: MEAQSATETQKNLKTLMELIKTKRPFKSSDFDTLNLDYLSGQSNEELFKLLIDAINGMKENVAKVNEYLTEEGDHSLSGDELLKFVYKELVYDDESEFDKEKLQKLYKTFSEDSNAFATLQSYIQYLQPEENSQRWIQVHEPVKHRRRLNHNPALQEISMDSRVQPSQLDLHSPFRDCLSLLSATSFLSAF.

The polypeptide is Gene BABR protein 1 (Babesia bovis).